The chain runs to 123 residues: Ribosome-binding factor A (123 aa).

Belongs to the RbfA family. Monomer. Binds 30S ribosomal subunits, but not 50S ribosomal subunits or 70S ribosomes.

It is found in the cytoplasm. Functionally, one of several proteins that assist in the late maturation steps of the functional core of the 30S ribosomal subunit. Associates with free 30S ribosomal subunits (but not with 30S subunits that are part of 70S ribosomes or polysomes). Required for efficient processing of 16S rRNA. May interact with the 5'-terminal helix region of 16S rRNA. In Lactobacillus gasseri (strain ATCC 33323 / DSM 20243 / BCRC 14619 / CIP 102991 / JCM 1131 / KCTC 3163 / NCIMB 11718 / NCTC 13722 / AM63), this protein is Ribosome-binding factor A.